We begin with the raw amino-acid sequence, 73 residues long: Large ribosomal subunit protein bL31 (73 aa).

C16, C18, C37, and C40 together coordinate Zn(2+).

It belongs to the bacterial ribosomal protein bL31 family. Type A subfamily. In terms of assembly, part of the 50S ribosomal subunit. The cofactor is Zn(2+).

Binds the 23S rRNA. The sequence is that of Large ribosomal subunit protein bL31 from Pseudomonas syringae pv. syringae (strain B728a).